A 587-amino-acid chain; its full sequence is 65-kDa microtubule-associated protein 1 (587 aa).

Coiled-coil stretches lie at residues 46-84 (QECLDVYKRKVEQAAKSRAELLQTLSDANAELSSLTMSL), 151-181 (DESDLSLKKLDDFQSQLQELQKEKSDRLRKV), 234-257 (LTLKDDKKQRLQKLQELATQLIDL), 290-317 (ALARDLIEQAEVEVDRLDQLKASRMKEI), and 461-489 (AMLDEYGMLRQEREEEKRRLREQKKVQEQ). Over residues 474–494 (EEEKRRLREQKKVQEQPHVEQ) the composition is skewed to basic and acidic residues. Residues 474 to 587 (EEEKRRLREQ…AADHQVPASP (114 aa)) form a disordered region. The residue at position 503 (Ser503) is a Phosphoserine. Thr526 is subject to Phosphothreonine. Residues 531 to 542 (LSLNANQNGSRS) show a composition bias toward polar residues. Ser532 and Ser540 each carry phosphoserine. Thr543 and Thr552 each carry phosphothreonine. Over residues 543-553 (TAKEAGRRETL) the composition is skewed to basic and acidic residues. Ser573, Ser576, and Ser586 each carry phosphoserine.

Belongs to the MAP65/ASE1 family. Forms dimer. Binds to MT, mostly with coaligned MT, both between parallel or antiparallel, forming thick bundles. Interacts with the alpha-tubulin subunit of the tubulin heterodimer. Bundles polymerized MT via the formation of 25-nm crossbridges at specific stages of the cell cycle (e.g. bundles microtubules in interphase, anaphase and telophase but does not bind microtubules in prophase or metaphase), at the plus-end, the minus-end, or along the entire length of MT, and along phragmoplast MT. Interacts with SH3P1 and MPK4. In terms of processing, basal phosphorylation at all stages of the cell cycle. MT-binding properties inhibited by hyperphosphorylation mediated by CDKs and/or MAPKs (e.g. ANP2, ANP3, MPK4 and MPK6) during prometaphase and metaphase. In terms of tissue distribution, expressed in all organs and tissues with the exception of sepals and anthers. Bound to subsets of microtubules in the cells of root epidermis, hypocotyl and cotyledons (at protein level).

It is found in the nucleus. The protein localises to the cytoplasm. Its subcellular location is the cytoskeleton. It localises to the spindle. The protein resides in the phragmoplast. It is found in the cell cortex. In terms of biological role, microtubule-associated protein that bundle and stabilize adjacent microtubules (MT) of the cell cortex. Enhances MT nucleation. Can also bind to tubulin dimers and promotes their polymerization. Confers MT resistance to the drug propyzamide and cold conditions. Plays a role in the central spindle at anaphase to early cytokinesis but is not essential at the midline of the phragmoplast at later stages. Represses metaphase spindle organization and the transition to anaphase in dephosphorylated active form. Promotes the formation of a planar network of antiparallel microtubules. May be involved in stomatal movement modulation by regulating the dynamic and arrangement of cortical MT. In Arabidopsis thaliana (Mouse-ear cress), this protein is 65-kDa microtubule-associated protein 1 (MAP65-1).